The chain runs to 417 residues: D-amino acid dehydrogenase (417 aa).

FAD is bound at residue 3-17 (AVVLGSGVVGLMSAW).

It belongs to the DadA oxidoreductase family. It depends on FAD as a cofactor.

It catalyses the reaction a D-alpha-amino acid + A + H2O = a 2-oxocarboxylate + AH2 + NH4(+). Oxidative deamination of D-amino acids. The protein is D-amino acid dehydrogenase of Vibrio vulnificus (strain CMCP6).